We begin with the raw amino-acid sequence, 122 residues long: Large ribosomal subunit protein uL18 (122 aa).

This sequence belongs to the universal ribosomal protein uL18 family. Part of the 50S ribosomal subunit; part of the 5S rRNA/L5/L18/L25 subcomplex. Contacts the 5S and 23S rRNAs.

Functionally, this is one of the proteins that bind and probably mediate the attachment of the 5S RNA into the large ribosomal subunit, where it forms part of the central protuberance. The polypeptide is Large ribosomal subunit protein uL18 (Synechococcus sp. (strain JA-3-3Ab) (Cyanobacteria bacterium Yellowstone A-Prime)).